The following is a 189-amino-acid chain: Movement protein (189 aa).

The protein belongs to the tombusvirus/aureusvirus movement protein p22 family. As to quaternary structure, interacts with host protein HFI22. Phosphorylated.

It is found in the host membrane. Its function is as follows. Transports viral genome to neighboring plant cells directly through plasmosdesmata, without any budding. The movement protein allows efficient cell to cell propagation, by bypassing the host cell wall barrier. The protein is Movement protein of Capsicum annuum (Capsicum pepper).